A 195-amino-acid chain; its full sequence is Imidazoleglycerol-phosphate dehydratase (195 aa).

This sequence belongs to the imidazoleglycerol-phosphate dehydratase family.

Its subcellular location is the cytoplasm. It catalyses the reaction D-erythro-1-(imidazol-4-yl)glycerol 3-phosphate = 3-(imidazol-4-yl)-2-oxopropyl phosphate + H2O. It functions in the pathway amino-acid biosynthesis; L-histidine biosynthesis; L-histidine from 5-phospho-alpha-D-ribose 1-diphosphate: step 6/9. The sequence is that of Imidazoleglycerol-phosphate dehydratase from Paraburkholderia xenovorans (strain LB400).